The primary structure comprises 311 residues: tRNA-cytidine(32) 2-sulfurtransferase (311 aa).

Residues 45-50 (SGGKDS) carry the PP-loop motif motif. Positions 120, 123, and 211 each coordinate [4Fe-4S] cluster.

It belongs to the TtcA family. Homodimer. The cofactor is Mg(2+). It depends on [4Fe-4S] cluster as a cofactor.

The protein resides in the cytoplasm. It carries out the reaction cytidine(32) in tRNA + S-sulfanyl-L-cysteinyl-[cysteine desulfurase] + AH2 + ATP = 2-thiocytidine(32) in tRNA + L-cysteinyl-[cysteine desulfurase] + A + AMP + diphosphate + H(+). It participates in tRNA modification. Functionally, catalyzes the ATP-dependent 2-thiolation of cytidine in position 32 of tRNA, to form 2-thiocytidine (s(2)C32). The sulfur atoms are provided by the cysteine/cysteine desulfurase (IscS) system. The polypeptide is tRNA-cytidine(32) 2-sulfurtransferase (Shewanella pealeana (strain ATCC 700345 / ANG-SQ1)).